Here is a 627-residue protein sequence, read N- to C-terminus: MPHHRASSGQDHLRAGWEQRLERSLPAPRVGLLWMGLGLALVLALFDSTVLWVPARAYPLPSEGHSVKFSAIAPPLQSAFGWQNLTCPACKVLFTALNHGLKKEPNVARVGSVAIKICKMLNIAPLDVCQSAVHLFEDDVVEVWTRSVLSPSEACGLLLGSSCGHWDIFSTWNISLPSVPKPPPKPPSPPAPGAPVSRVLFLTDLHWDHEYLEGTDPYCADPLCCRRGSGWPPNSQKGAGFWGEYSKCDLPLRTLESLLKGLGPAGPFEMVYWTGDIPAHDVWQQSRQDQLRALTTITDLVRKFLGPVPVYPAVGNHESTPVNGFPPPFIKGNQSSQWLYEAMAKAWEPWLPADALHTLRIGGFYALTPRPGLRLISLNMNFCSRENFWLLINSTDPAGQLQWLVEELQAAENRGDKVHIIGHIPPGHCLKSWSWNYYKIIARYENTLAGQFFGHTHVDEFEIFYDEETLSRPLAVAFLAPSATTFINLNPGYRVYQIDGNYPGSSHVVLDHETYILNLTQANAAGGTPSWKRLYRARETYGLPDAMPASWHNLVYRMRDDEQLFQTFWFLYHKGHPPSEPCGTPCRLATLCAQLSARADSPALCRHLMPNGSLPDANRLWSRPLLC.

Residues 1-44 (MPHHRASSGQDHLRAGWEQRLERSLPAPRVGLLWMGLGLALVLA) form the signal peptide. The region spanning 83-167 (QNLTCPACKV…LLGSSCGHWD (85 aa)) is the Saposin B-type domain. The N-linked (GlcNAc...) asparagine glycan is linked to N84. 3 disulfide bridges follow: C87–C163, C90–C155, and C118–C129. A glycan (N-linked (GlcNAc...) asparagine) is linked at N173. Zn(2+)-binding residues include D204 and H206. Intrachain disulfides connect C219-C224 and C225-C248. Zn(2+)-binding residues include D276 and N316. N-linked (GlcNAc...) asparagine glycosylation is found at N333 and N393. A disulfide bond links C383 and C429. Positions 423, 455, and 457 each coordinate Zn(2+). S506 is modified (phosphoserine). An N-linked (GlcNAc...) asparagine glycan is attached at N518. Disulfide bonds link C582–C586 and C592–C605. N611 carries N-linked (GlcNAc...) asparagine glycosylation.

It belongs to the acid sphingomyelinase family. Monomer. Interacts with SORT1; the interaction is required for SMPD1 targeting to lysosomes. It depends on Zn(2+) as a cofactor. In terms of processing, proteolytically processed. Mature lysosomal form arises from C-terminal proteolytic processing of pro-sphingomyelin phosphodiesterase. Both lysosomal and secreted forms are glycosylated but they show a differential pattern of glycosylation. Post-translationally, phosphorylated at Ser-506 by PRKCD upon stress stimuli. Phosphorylation is required for secretion. In terms of processing, this form is generated following cleavage by CASP7 in the extracellular milieu. It shows increased activity.

It localises to the lysosome. Its subcellular location is the lipid droplet. The protein localises to the secreted. It is found in the extracellular space. The catalysed reaction is a sphingomyelin + H2O = phosphocholine + an N-acylsphing-4-enine + H(+). It catalyses the reaction N-(octadecanoyl)-sphing-4-enine-1-phosphocholine + H2O = N-octadecanoylsphing-4-enine + phosphocholine + H(+). The enzyme catalyses a 1,2-diacyl-sn-glycero-3-phosphocholine + H2O = phosphocholine + a 1,2-diacyl-sn-glycerol + H(+). It carries out the reaction 1,2-dihexadecanoyl-sn-glycero-3-phosphocholine + H2O = 1,2-dihexadecanoyl-sn-glycerol + phosphocholine + H(+). Hydrolysis of liposomal sphingomyelin is stimulated by incorporation of diacylglycerol (DAG), ceramide and free fatty acids into the liposomal membranes. Phosphatidylcholine hydrolysis is inhibited by incorporation of cholesterol, ceramide, DAG, monoacylglycerol and fatty acids. Functionally, converts sphingomyelin to ceramide. Exists as two enzymatic forms that arise from alternative trafficking of a single protein precursor, one that is targeted to the endolysosomal compartment, whereas the other is released extracellularly. However, in response to various forms of stress, lysosomal exocytosis may represent a major source of the secretory form. In terms of biological role, in the lysosomes, converts sphingomyelin to ceramide. Plays an important role in the export of cholesterol from the intraendolysosomal membranes. Also has phospholipase C activities toward 1,2-diacylglycerolphosphocholine and 1,2-diacylglycerolphosphoglycerol. Modulates stress-induced apoptosis through the production of ceramide. When secreted, modulates cell signaling with its ability to reorganize the plasma membrane by converting sphingomyelin to ceramide. Secreted form is increased in response to stress and inflammatory mediators such as IL1B, IFNG or TNF as well as upon infection with bacteria and viruses. Produces the release of ceramide in the outer leaflet of the plasma membrane playing a central role in host defense. Ceramide reorganizes these rafts into larger signaling platforms that are required to internalize P.aeruginosa, induce apoptosis and regulate the cytokine response in infected cells. In wounded cells, the lysosomal form is released extracellularly in the presence of Ca(2+) and promotes endocytosis and plasma membrane repair. Its function is as follows. This form is generated following cleavage by CASP7 in the extracellular milieu in response to bacterial infection. It shows increased ability to convert sphingomyelin to ceramide and promotes plasma membrane repair. Plasma membrane repair by ceramide counteracts the action of gasdermin-D (GSDMD) perforin (PRF1) pores that are formed in response to bacterial infection. Functionally, (Microbial infection) Secretion is activated by bacteria such as P.aeruginosa, this activation results in the release of ceramide in the outer leaflet of the plasma membrane which facilitates the infection. This chain is Sphingomyelin phosphodiesterase, found in Mus musculus (Mouse).